We begin with the raw amino-acid sequence, 87 residues long: Diazepam-binding inhibitor-like 5 (87 aa).

One can recognise an ACB domain in the interval 2-87 (SQVEFEMACA…VEELKKNETC (86 aa)). Residues 29-33 (YSFYK), lysine 55, and tyrosine 74 each bind an acyl-CoA.

It belongs to the ACBP family. As to expression, testis.

It localises to the cytoplasm. Its function is as follows. May be involved in the energy metabolism of the mature sperm. This is Diazepam-binding inhibitor-like 5 (Dbil5) from Rattus norvegicus (Rat).